A 557-amino-acid polypeptide reads, in one-letter code: Ribonuclease J 2 (557 aa).

Zn(2+) is bound by residues H76, H78, H144, and E166. Substrate is bound at residue 366 to 370; it reads HASSH.

It belongs to the metallo-beta-lactamase superfamily. RNA-metabolizing metallo-beta-lactamase-like family. Bacterial RNase J subfamily. As to quaternary structure, homodimer, may be a subunit of the RNA degradosome. Zn(2+) is required as a cofactor.

The protein resides in the cytoplasm. An RNase that has 5'-3' exonuclease and possibly endoonuclease activity. Involved in maturation of rRNA and in some organisms also mRNA maturation and/or decay. The chain is Ribonuclease J 2 from Staphylococcus aureus (strain MRSA252).